The following is a 452-amino-acid chain: GTPase Der (452 aa).

EngA-type G domains follow at residues Lys9–Asp170 and Leu185–Asn362. Residues Gly15–Ser22, Asp62–Leu66, Asn124–Glu127, Gly191–Ser198, Asp238–Leu242, and Asn303–Asp306 contribute to the GTP site. A KH-like domain is found at Lys363 to Lys448.

It belongs to the TRAFAC class TrmE-Era-EngA-EngB-Septin-like GTPase superfamily. EngA (Der) GTPase family. In terms of assembly, associates with the 50S ribosomal subunit.

Functionally, GTPase that plays an essential role in the late steps of ribosome biogenesis. In Rickettsia bellii (strain RML369-C), this protein is GTPase Der.